A 639-amino-acid chain; its full sequence is DNA mismatch repair protein MutL (639 aa).

A disordered region spans residues 336–392 (SAHDDPTPAISGAARDEEPRGVENRASAGENRFNRPASSPVASAPRPAHVAAPRMPA). Positions 349 to 358 (ARDEEPRGVE) are enriched in basic and acidic residues. The segment covering 370 to 392 (RPASSPVASAPRPAHVAAPRMPA) has biased composition (low complexity).

It belongs to the DNA mismatch repair MutL/HexB family.

This protein is involved in the repair of mismatches in DNA. It is required for dam-dependent methyl-directed DNA mismatch repair. May act as a 'molecular matchmaker', a protein that promotes the formation of a stable complex between two or more DNA-binding proteins in an ATP-dependent manner without itself being part of a final effector complex. The chain is DNA mismatch repair protein MutL from Edwardsiella ictaluri (strain 93-146).